A 184-amino-acid polypeptide reads, in one-letter code: ATP synthase subunit b, chloroplastic (184 aa).

A helical transmembrane segment spans residues 31–49; it reads IINPSVVLSVLIYFGKGVL.

It belongs to the ATPase B chain family. As to quaternary structure, F-type ATPases have 2 components, F(1) - the catalytic core - and F(0) - the membrane proton channel. F(1) has five subunits: alpha(3), beta(3), gamma(1), delta(1), epsilon(1). F(0) has four main subunits: a(1), b(1), b'(1) and c(10-14). The alpha and beta chains form an alternating ring which encloses part of the gamma chain. F(1) is attached to F(0) by a central stalk formed by the gamma and epsilon chains, while a peripheral stalk is formed by the delta, b and b' chains.

It localises to the plastid. The protein localises to the chloroplast thylakoid membrane. F(1)F(0) ATP synthase produces ATP from ADP in the presence of a proton or sodium gradient. F-type ATPases consist of two structural domains, F(1) containing the extramembraneous catalytic core and F(0) containing the membrane proton channel, linked together by a central stalk and a peripheral stalk. During catalysis, ATP synthesis in the catalytic domain of F(1) is coupled via a rotary mechanism of the central stalk subunits to proton translocation. In terms of biological role, component of the F(0) channel, it forms part of the peripheral stalk, linking F(1) to F(0). The sequence is that of ATP synthase subunit b, chloroplastic from Pinus koraiensis (Korean pine).